A 586-amino-acid chain; its full sequence is U-box domain-containing protein 73 (586 aa).

A disordered region spans residues 21-122 (KADMSGLQRS…AAGADDGPTR (102 aa)). A compositionally biased stretch (low complexity) spans 50–60 (RSAPTSPLRTP). The U-box domain maps to 182 to 258 (PIPIAHDGTL…SAWCLDHSDL (77 aa)).

It catalyses the reaction S-ubiquitinyl-[E2 ubiquitin-conjugating enzyme]-L-cysteine + [acceptor protein]-L-lysine = [E2 ubiquitin-conjugating enzyme]-L-cysteine + N(6)-ubiquitinyl-[acceptor protein]-L-lysine.. It participates in protein modification; protein ubiquitination. Possesses E3 ubiquitin-protein ligase in vitro. The sequence is that of U-box domain-containing protein 73 (PUB73) from Oryza sativa subsp. japonica (Rice).